The chain runs to 438 residues: GTPase Der (438 aa).

2 consecutive EngA-type G domains span residues 4-168 and 176-351; these read PVVA…PAGA and VRIA…GEYR. Residues 10–17, 57–61, 120–123, 182–189, 229–233, and 294–297 each bind GTP; these read GRPNVGKS, DTGGI, NKVD, DTAGM, and NKWD. Positions 352–436 constitute a KH-like domain; that stretch reads RQIPTSMLNR…PVRILFRRRE (85 aa).

The protein belongs to the TRAFAC class TrmE-Era-EngA-EngB-Septin-like GTPase superfamily. EngA (Der) GTPase family. As to quaternary structure, associates with the 50S ribosomal subunit.

Its function is as follows. GTPase that plays an essential role in the late steps of ribosome biogenesis. This chain is GTPase Der, found in Desulforudis audaxviator (strain MP104C).